The chain runs to 172 residues: 3-hydroxydecanoyl-[acyl-carrier-protein] dehydratase (172 aa).

His71 is a catalytic residue.

Belongs to the thioester dehydratase family. FabA subfamily. Homodimer.

The protein resides in the cytoplasm. It carries out the reaction a (3R)-hydroxyacyl-[ACP] = a (2E)-enoyl-[ACP] + H2O. The enzyme catalyses (3R)-hydroxydecanoyl-[ACP] = (2E)-decenoyl-[ACP] + H2O. The catalysed reaction is (2E)-decenoyl-[ACP] = (3Z)-decenoyl-[ACP]. It participates in lipid metabolism; fatty acid biosynthesis. In terms of biological role, necessary for the introduction of cis unsaturation into fatty acids. Catalyzes the dehydration of (3R)-3-hydroxydecanoyl-ACP to E-(2)-decenoyl-ACP and then its isomerization to Z-(3)-decenoyl-ACP. Can catalyze the dehydratase reaction for beta-hydroxyacyl-ACPs with saturated chain lengths up to 16:0, being most active on intermediate chain length. This chain is 3-hydroxydecanoyl-[acyl-carrier-protein] dehydratase, found in Brucella ovis (strain ATCC 25840 / 63/290 / NCTC 10512).